Here is a 393-residue protein sequence, read N- to C-terminus: Probable RNA methyltransferase sce3898 (393 aa).

Catalysis depends on Glu-82, which acts as the Proton acceptor. Residues 90–329 (RPGRYSACVS…VRSARLDAFR (240 aa)) form the Radical SAM core domain. Cys-97 and Cys-353 are oxidised to a cystine. Residues Cys-104, Cys-108, and Cys-111 each coordinate [4Fe-4S] cluster. S-adenosyl-L-methionine-binding positions include 157 to 158 (GE), 212 to 214 (SLG), and Asn-294. Catalysis depends on Cys-353, which acts as the S-methylcysteine intermediate. The interval 357–393 (ARPSAEAQRPGGRRAPPRPGATAGAADVGPSAPPRPA) is disordered. Over residues 373–382 (PRPGATAGAA) the composition is skewed to low complexity.

The protein belongs to the radical SAM superfamily. RlmN family. [4Fe-4S] cluster is required as a cofactor.

The protein resides in the cytoplasm. The protein is Probable RNA methyltransferase sce3898 of Sorangium cellulosum (strain So ce56) (Polyangium cellulosum (strain So ce56)).